The following is an 81-amino-acid chain: UPF0410 protein YwzA (81 aa).

3 helical membrane passes run 1-21 (MSFL…SLFV), 27-47 (GGII…HGLL), and 56-76 (GFAI…VSLL).

The protein belongs to the UPF0410 family.

The protein resides in the cell membrane. The chain is UPF0410 protein YwzA (ywzA) from Bacillus subtilis (strain 168).